Consider the following 359-residue polypeptide: Peptide chain release factor 1 (359 aa).

Glutamine 235 carries the N5-methylglutamine modification. Residues alanine 280 to isoleucine 306 are disordered.

The protein belongs to the prokaryotic/mitochondrial release factor family. Post-translationally, methylated by PrmC. Methylation increases the termination efficiency of RF1.

The protein resides in the cytoplasm. In terms of biological role, peptide chain release factor 1 directs the termination of translation in response to the peptide chain termination codons UAG and UAA. This is Peptide chain release factor 1 from Rhizobium leguminosarum bv. trifolii (strain WSM2304).